A 470-amino-acid chain; its full sequence is Nuclear receptor subfamily 0 group B member 1 (470 aa).

3 tandem repeats follow at residues 1 to 67 (MAGE…YRCC), 68 to 133 (FCGK…YRCC), and 134 to 200 (FCGE…YRCC). The segment at 1–253 (MAGEDHQWQG…RPVALKNPQV (253 aa)) is 4 X 67 AA tandem repeats. Short sequence motifs (LXXLL motif) lie at residues 13–17 (LYNML), 80–84 (LYSML), and 146–150 (LYSLL). Residues 201–253 (FCGEDQPQQGSTLYSMPTSTNQTPAAPEERPGAPWWDTSCGALRPVALKNPQV) form a 4; truncated repeat. One can recognise an NR LBD domain in the interval 205 to 469 (DQPQQGSTLY…DMMLEMLCTK (265 aa)). The AF-2 motif signature appears at 461-466 (MMLEML).

Belongs to the nuclear hormone receptor family. NR0 subfamily. Homodimer. Interacts with NR5A1, NR5A2, NR0B2 and with COPS2. Interacts with ESRRB; represses ESRRB activity at the GATA6 promoter.

It localises to the nucleus. Its subcellular location is the cytoplasm. Functionally, nuclear receptor that lacks a DNA-binding domain and acts as a corepressor that inhibits the transcriptional activity of other nuclear receptors through heterodimeric interactions. Component of a cascade required for the development of the hypothalamic-pituitary-adrenal-gonadal axis. May also have a role in the development of the embryo and in the maintenance of embryonic stem cell pluripotency. This Callithrix jacchus (White-tufted-ear marmoset) protein is Nuclear receptor subfamily 0 group B member 1 (NR0B1).